The chain runs to 94 residues: Preprofallaxidin-9 (94 aa).

The signal sequence occupies residues 1-22; that stretch reads MASLKKSLFLVLFLGLVSLSIC. A propeptide spanning residues 23-46 is cleaved from the precursor; it reads EEEKRENEEDAEDENHEEESEEKR. The disordered stretch occupies residues 27-46; sequence RENEEDAEDENHEEESEEKR. The segment covering 30–42 has biased composition (acidic residues); sequence EEDAEDENHEEES. Leucine 62 is modified (leucine amide). A propeptide spanning residues 66-70 is cleaved from the precursor; that stretch reads SEEKR. Methionine 75 is modified (methionine amide). A propeptide spanning residues 79 to 83 is cleaved from the precursor; that stretch reads SEEKR. Methionine 88 carries the post-translational modification Methionine amide. Positions 92 to 94 are excised as a propeptide; that stretch reads SEE.

The protein belongs to the frog skin active peptide (FSAP) family. Brevinin subfamily. In terms of tissue distribution, expressed by the skin glands.

It localises to the secreted. Fallaxidin-1.3 shows no antibacterial activity against Gram-positive or Gram-negative bacteria. Does not inhibit the formation of NO by neuronal nitric oxide synthase. Has no effect on splenocyte proliferation or smooth muscle contraction. Functionally, fallaxidin-3.2 shows antibacterial activity against the Gram-positive bacteria E.faecalis (MIC=100 uM) and L.lactis (MIC=500 uM). No antibacterial activity against the Gram-positive bacteria B.cereus, L.innocua, M.luteus, S.epidermidis, S.uberis and S.aureus, or the Gram-negative bacteria E.cloacae and E.coli. This is Preprofallaxidin-9 from Litoria fallax (Eastern dwarf tree frog).